A 52-amino-acid polypeptide reads, in one-letter code: Conotoxin Cal9.2b (52 aa).

A propeptide spanning residues 1 to 6 (KKGVTL) is cleaved from the precursor. 3 disulfide bridges follow: C14/C31, C19/C41, and C21/C46.

In terms of tissue distribution, expressed by the venom duct.

The protein localises to the secreted. Its function is as follows. Probable neurotoxin with unknown target. Possibly targets ion channels. The protein is Conotoxin Cal9.2b of Californiconus californicus (California cone).